A 778-amino-acid polypeptide reads, in one-letter code: Dolichyl-phosphate-mannose--protein mannosyltransferase 4 (778 aa).

A compositionally biased stretch (basic and acidic residues) spans 1–28 (MASKSEKAVKKAQKLSKEPSVELTDTKS). The segment at 1-44 (MASKSEKAVKKAQKLSKEPSVELTDTKSSDNVTPKQKSPNSTEE) is disordered. Positions 29 to 41 (SDNVTPKQKSPNS) are enriched in polar residues. Asparagine 40 carries N-linked (GlcNAc...) asparagine glycosylation. Transmembrane regions (helical) follow at residues 60 to 80 (LAFVLITVLSFITRFWNLNLP), 103 to 123 (FFDLHPPFAKLLLALVAKLAG), 145 to 165 (VTIRAWPALLSSLVPPVVFLI), 196 to 216 (ILLDATLLFSMVCAIYCYVRF), 223 to 243 (PFSRPWWAWLFFTGFFLSCTI), 248 to 268 (VGFFTFLSIGLSVCLELWYLW), and 288 to 308 (FCLIFFPFLFFLFWFYMHFNI). N-linked (GlcNAc...) asparagine glycosylation occurs at asparagine 335. MIR domains lie at 336 to 396 (STIL…ILPA), 408 to 467 (NVPV…VVMS), and 474 to 529 (RPLY…FDDI). A run of 4 helical transmembrane segments spans residues 608-628 (WWIIAGTVLSTTVVAAAEILL), 644-664 (FYRSTMFFYMTYVFHYLPFFI), 669-689 (LFLHHYLPAHLAGSLLVGAFI), and 726-746 (VIELICTLLLIFVVIYCFTFF).

It belongs to the glycosyltransferase 39 family.

The protein localises to the endoplasmic reticulum membrane. The catalysed reaction is a di-trans,poly-cis-dolichyl beta-D-mannosyl phosphate + L-seryl-[protein] = 3-O-(alpha-D-mannosyl)-L-seryl-[protein] + a di-trans,poly-cis-dolichyl phosphate + H(+). The enzyme catalyses a di-trans,poly-cis-dolichyl beta-D-mannosyl phosphate + L-threonyl-[protein] = 3-O-(alpha-D-mannosyl)-L-threonyl-[protein] + a di-trans,poly-cis-dolichyl phosphate + H(+). It functions in the pathway protein modification; protein glycosylation. Its function is as follows. Transfers mannose from Dol-P-mannose to Ser or Thr residues on proteins. Required for normal cell wall and septum formation. This chain is Dolichyl-phosphate-mannose--protein mannosyltransferase 4 (ogm4), found in Schizosaccharomyces pombe (strain 972 / ATCC 24843) (Fission yeast).